The primary structure comprises 345 residues: Selenide, water dikinase (345 aa).

Cys-16 is an active-site residue. Residues Lys-19 and 46-48 (TSD) each bind ATP. Asp-49 serves as a coordination point for Mg(2+). ATP is bound by residues Asp-66, Asp-89, and 136-138 (GHT). Asp-89 is a binding site for Mg(2+). Asp-224 contacts Mg(2+).

It belongs to the selenophosphate synthase 1 family. Class I subfamily. As to quaternary structure, homodimer. Mg(2+) serves as cofactor.

It catalyses the reaction hydrogenselenide + ATP + H2O = selenophosphate + AMP + phosphate + 2 H(+). In terms of biological role, synthesizes selenophosphate from selenide and ATP. The chain is Selenide, water dikinase from Clostridium botulinum (strain Eklund 17B / Type B).